We begin with the raw amino-acid sequence, 212 residues long: Methylthioribulose-1-phosphate dehydratase (212 aa).

Zn(2+)-binding residues include His99 and His101.

Belongs to the aldolase class II family. MtnB subfamily. As to quaternary structure, homotetramer. It depends on Zn(2+) as a cofactor.

It carries out the reaction 5-(methylsulfanyl)-D-ribulose 1-phosphate = 5-methylsulfanyl-2,3-dioxopentyl phosphate + H2O. Its pathway is amino-acid biosynthesis; L-methionine biosynthesis via salvage pathway; L-methionine from S-methyl-5-thio-alpha-D-ribose 1-phosphate: step 2/6. Its function is as follows. Catalyzes the dehydration of methylthioribulose-1-phosphate (MTRu-1-P) into 2,3-diketo-5-methylthiopentyl-1-phosphate (DK-MTP-1-P). The polypeptide is Methylthioribulose-1-phosphate dehydratase (Bacillus pumilus (strain SAFR-032)).